Here is a 188-residue protein sequence, read N- to C-terminus: Defensin-like protein 99 (188 aa).

The signal sequence occupies residues 1–28 (MGSLKLSTVVVTALVVCLSILLISPTEA). 7 disulfide bridges follow: C37–C95, C45–C77, C58–C92, C62–C94, C123–C178, C137–C175, and C141–C177.

Belongs to the DEFL family.

The protein resides in the secreted. The chain is Defensin-like protein 99 from Arabidopsis thaliana (Mouse-ear cress).